Consider the following 206-residue polypeptide: Thymidylate kinase (206 aa).

An ATP-binding site is contributed by 11–18 (GIDGAGKT).

It belongs to the thymidylate kinase family.

The catalysed reaction is dTMP + ATP = dTDP + ADP. Its function is as follows. Phosphorylation of dTMP to form dTDP in both de novo and salvage pathways of dTTP synthesis. The sequence is that of Thymidylate kinase from Burkholderia lata (strain ATCC 17760 / DSM 23089 / LMG 22485 / NCIMB 9086 / R18194 / 383).